We begin with the raw amino-acid sequence, 294 residues long: Glycine--tRNA ligase alpha subunit (294 aa).

The protein belongs to the class-II aminoacyl-tRNA synthetase family. As to quaternary structure, tetramer of two alpha and two beta subunits.

It localises to the cytoplasm. It catalyses the reaction tRNA(Gly) + glycine + ATP = glycyl-tRNA(Gly) + AMP + diphosphate. This chain is Glycine--tRNA ligase alpha subunit, found in Trichodesmium erythraeum (strain IMS101).